The chain runs to 189 residues: Small ribosomal subunit protein uS5 (189 aa).

The region spanning 22 to 85 (FVDKLVAINR…EAAKRELIFV (64 aa)) is the S5 DRBM domain.

This sequence belongs to the universal ribosomal protein uS5 family. Part of the 30S ribosomal subunit. Contacts proteins S4 and S8.

In terms of biological role, with S4 and S12 plays an important role in translational accuracy. Its function is as follows. Located at the back of the 30S subunit body where it stabilizes the conformation of the head with respect to the body. The sequence is that of Small ribosomal subunit protein uS5 from Rhizobium johnstonii (strain DSM 114642 / LMG 32736 / 3841) (Rhizobium leguminosarum bv. viciae).